Consider the following 388-residue polypeptide: Beta-1,4-galactosyltransferase 5 (388 aa).

The Cytoplasmic segment spans residues 1-14; the sequence is MRARRGLLRLPRRS. Residues 15 to 35 form a helical; Signal-anchor for type II membrane protein membrane-spanning segment; sequence LLAALFFFSLSSSLLYFVYVA. At 36 to 388 the chain is on the lumenal side; sequence PGIVNTYLFM…TPELAQVNEY (353 aa). Residues N77, N81, N90, N111, and N128 are each glycosylated (N-linked (GlcNAc...) asparagine). Cysteines 114 and 158 form a disulfide. UDP-alpha-D-galactose is bound by residues 169 to 173, 208 to 210, 235 to 236, Y264, and W296; these read PFRNR, FNR, and VD. C229 and C248 form a disulfide bridge. D236 serves as a coordination point for Mn(2+). 298–301 contacts N-acetyl-D-glucosamine; that stretch reads GEDD. Position 329 (H329) interacts with Mn(2+). 329–330 lines the UDP-alpha-D-galactose pocket; the sequence is HH. Residue R340 participates in N-acetyl-D-glucosamine binding. Residues N364 and N373 are each glycosylated (N-linked (GlcNAc...) asparagine).

It belongs to the glycosyltransferase 7 family. Requires Mn(2+) as cofactor. As to expression, ubiquitously expressed.

Its subcellular location is the golgi apparatus. It is found in the golgi stack membrane. It carries out the reaction a beta-D-glucosyl-(1&lt;-&gt;1')-N-acylsphing-4-enine + UDP-alpha-D-galactose = a beta-D-Gal-(1-&gt;4)-beta-D-Glc-(1&lt;-&gt;1)-Cer(d18:1(4E)) + UDP + H(+). The protein operates within protein modification; protein glycosylation. It participates in sphingolipid metabolism. In terms of biological role, catalyzes the synthesis of lactosylceramide (LacCer) via the transfer of galactose from UDP-galactose to glucosylceramide (GlcCer). LacCer is the starting point in the biosynthesis of all gangliosides (membrane-bound glycosphingolipids) which play pivotal roles in the CNS including neuronal maturation and axonal and myelin formation. Plays a role in the glycosylation of BMPR1A and regulation of its protein stability. Essential for extraembryonic development during early embryogenesis. In Homo sapiens (Human), this protein is Beta-1,4-galactosyltransferase 5.